The chain runs to 173 residues: Protein tyrosine phosphatase type IVA 3 (173 aa).

In terms of domain architecture, Tyrosine-protein phosphatase spans 8–161 (APVEVSYKNM…YRPKQRLRFK (154 aa)). An intrachain disulfide couples Cys-49 to Cys-104. The Proton donor role is filled by Asp-72. Cys-104 serves as the catalytic Phosphocysteine intermediate. Arg-110 serves as a coordination point for substrate. Cys-170 carries the post-translational modification Cysteine methyl ester. Cys-170 carries the S-farnesyl cysteine lipid modification. The propeptide at 171-173 (CIM) is removed in mature form.

It belongs to the protein-tyrosine phosphatase family. Interacts with tubulin. In terms of processing, farnesylated. Farnesylation is required for membrane targeting. Unfarnesylated forms are shifted into the nucleus.

The protein localises to the cell membrane. It is found in the early endosome. The catalysed reaction is O-phospho-L-tyrosyl-[protein] + H2O = L-tyrosyl-[protein] + phosphate. Inhibited by sodium orthovanadate and peroxovanadium compounds, and by pentamidine. Its function is as follows. Protein tyrosine phosphatase which stimulates progression from G1 into S phase during mitosis. Enhances cell proliferation, cell motility and invasive activity, and promotes cancer metastasis. May be involved in the progression of cardiac hypertrophy by inhibiting intracellular calcium mobilization in response to angiotensin II. In Bos taurus (Bovine), this protein is Protein tyrosine phosphatase type IVA 3 (PTP4A3).